A 278-amino-acid chain; its full sequence is Deoxyuridine 5'-triphosphate nucleotidohydrolase (278 aa).

Substrate is bound by residues 171–173 (RSG) and 273–274 (FG).

It belongs to the dUTPase family. It depends on Mg(2+) as a cofactor.

It catalyses the reaction dUTP + H2O = dUMP + diphosphate + H(+). Involved in nucleotide metabolism: produces dUMP, the immediate precursor of thymidine nucleotides and decreases the intracellular concentration of dUTP to avoid uracil incorporation into viral DNA. The chain is Deoxyuridine 5'-triphosphate nucleotidohydrolase from Homo sapiens (Human).